We begin with the raw amino-acid sequence, 433 residues long: Oxaloacetate decarboxylase beta chain 2 (433 aa).

10 helical membrane passes run 16–36 (LGAGQAIMLLVSLLLLWLAIA), 42–62 (LLLLPIGFGGLLSNIPEAGMA), 122–142 (VLALFYKVAIGSGVAPLVIFM), 168–188 (FGIFATVLGALTLNYFGLIAF), 190–210 (LPQAAAIGIIGGADGPTAIYL), 216–236 (PELLGAIAVAAYSYMALVPLI), 266–286 (ILFPVVLLLLVALLLPDAAPL), 311–331 (NGLINIVTIFLGLSVGAKLVA), 340–360 (LGILLLGVIAFGIGTAAGVLM), and 413–433 (VAGVIGSAIAAGVMLKYVLAM).

The protein belongs to the GcdB/MmdB/OadB family. As to quaternary structure, heterotrimer of an alpha, a beta and a gamma subunit. The cofactor is Na(+).

It is found in the cell membrane. It catalyses the reaction oxaloacetate + 2 Na(+)(in) + H(+) = pyruvate + 2 Na(+)(out) + CO2. Its function is as follows. Catalyzes the decarboxylation of oxaloacetate coupled to Na(+) translocation. This chain is Oxaloacetate decarboxylase beta chain 2 (oadB2), found in Salmonella typhi.